The following is a 156-amino-acid chain: Small ribosomal subunit protein uS7 (156 aa).

It belongs to the universal ribosomal protein uS7 family. In terms of assembly, part of the 30S ribosomal subunit. Contacts proteins S9 and S11.

One of the primary rRNA binding proteins, it binds directly to 16S rRNA where it nucleates assembly of the head domain of the 30S subunit. Is located at the subunit interface close to the decoding center, probably blocks exit of the E-site tRNA. This Acetivibrio thermocellus (strain ATCC 27405 / DSM 1237 / JCM 9322 / NBRC 103400 / NCIMB 10682 / NRRL B-4536 / VPI 7372) (Clostridium thermocellum) protein is Small ribosomal subunit protein uS7.